Reading from the N-terminus, the 449-residue chain is Trigger factor (449 aa).

Positions 172-257 (GDEVRFDFKG…IKEITNVKPQ (86 aa)) constitute a PPIase FKBP-type domain.

Belongs to the FKBP-type PPIase family. Tig subfamily.

It localises to the cytoplasm. The enzyme catalyses [protein]-peptidylproline (omega=180) = [protein]-peptidylproline (omega=0). Its function is as follows. Involved in protein export. Acts as a chaperone by maintaining the newly synthesized protein in an open conformation. Functions as a peptidyl-prolyl cis-trans isomerase. The sequence is that of Trigger factor from Ureaplasma parvum serovar 3 (strain ATCC 27815 / 27 / NCTC 11736).